A 234-amino-acid chain; its full sequence is Uridylate kinase (234 aa).

9-12 serves as a coordination point for ATP; it reads KLSG. A UMP-binding site is contributed by glycine 51. 2 residues coordinate ATP: glycine 52 and arginine 56. Residues aspartate 71 and 132–139 each bind UMP; that span reads CGNPFFTT. ATP contacts are provided by threonine 159, tyrosine 165, and aspartate 168.

Belongs to the UMP kinase family. As to quaternary structure, homohexamer.

Its subcellular location is the cytoplasm. The enzyme catalyses UMP + ATP = UDP + ADP. Its pathway is pyrimidine metabolism; CTP biosynthesis via de novo pathway; UDP from UMP (UMPK route): step 1/1. With respect to regulation, inhibited by UTP. Its function is as follows. Catalyzes the reversible phosphorylation of UMP to UDP. This chain is Uridylate kinase, found in Prochlorococcus marinus (strain AS9601).